The chain runs to 225 residues: Ribosomal RNA small subunit methyltransferase G (225 aa).

S-adenosyl-L-methionine-binding positions include G69, 119–120 (AE), and R136.

Belongs to the methyltransferase superfamily. RNA methyltransferase RsmG family.

The protein resides in the cytoplasm. Functionally, specifically methylates the N7 position of a guanine in 16S rRNA. The chain is Ribosomal RNA small subunit methyltransferase G from Pseudothermotoga lettingae (strain ATCC BAA-301 / DSM 14385 / NBRC 107922 / TMO) (Thermotoga lettingae).